Reading from the N-terminus, the 637-residue chain is DNA mismatch repair protein MutL (637 aa).

Positions 353 to 371 are enriched in polar residues; that stretch reads GQGQRPVSSASMPSASRQA. A disordered region spans residues 353–444; that stretch reads GQGQRPVSSA…SEAASETPHD (92 aa). Over residues 378 to 389 the composition is skewed to basic and acidic residues; that stretch reads DWIKEGVQDWDW. A compositionally biased stretch (pro residues) spans 396 to 406; sequence PQNPPQNPPPG. Over residues 430–444 the composition is skewed to basic and acidic residues; it reads SGKELSEAASETPHD.

This sequence belongs to the DNA mismatch repair MutL/HexB family.

In terms of biological role, this protein is involved in the repair of mismatches in DNA. It is required for dam-dependent methyl-directed DNA mismatch repair. May act as a 'molecular matchmaker', a protein that promotes the formation of a stable complex between two or more DNA-binding proteins in an ATP-dependent manner without itself being part of a final effector complex. The sequence is that of DNA mismatch repair protein MutL from Beijerinckia indica subsp. indica (strain ATCC 9039 / DSM 1715 / NCIMB 8712).